A 550-amino-acid chain; its full sequence is Glucose-6-phosphate isomerase (550 aa).

Residue E356 is the Proton donor of the active site. Catalysis depends on residues H387 and K515.

It belongs to the GPI family.

It localises to the cytoplasm. The enzyme catalyses alpha-D-glucose 6-phosphate = beta-D-fructose 6-phosphate. It functions in the pathway carbohydrate biosynthesis; gluconeogenesis. The protein operates within carbohydrate degradation; glycolysis; D-glyceraldehyde 3-phosphate and glycerone phosphate from D-glucose: step 2/4. Its function is as follows. Catalyzes the reversible isomerization of glucose-6-phosphate to fructose-6-phosphate. This chain is Glucose-6-phosphate isomerase, found in Syntrophobacter fumaroxidans (strain DSM 10017 / MPOB).